We begin with the raw amino-acid sequence, 476 residues long: Adenosylhomocysteinase (476 aa).

3 residues coordinate substrate: threonine 67, aspartate 142, and glutamate 202. 203 to 205 serves as a coordination point for NAD(+); the sequence is TTT. Lysine 232 and aspartate 236 together coordinate substrate. NAD(+) contacts are provided by residues asparagine 237, 266–271, glutamate 289, asparagine 324, 345–347, and asparagine 390; these read GYGDVG and IGH.

Belongs to the adenosylhomocysteinase family. It depends on NAD(+) as a cofactor.

The protein resides in the cytoplasm. It catalyses the reaction S-adenosyl-L-homocysteine + H2O = L-homocysteine + adenosine. It functions in the pathway amino-acid biosynthesis; L-homocysteine biosynthesis; L-homocysteine from S-adenosyl-L-homocysteine: step 1/1. Functionally, may play a key role in the regulation of the intracellular concentration of adenosylhomocysteine. This is Adenosylhomocysteinase from Synechococcus sp. (strain WH7803).